The following is a 227-amino-acid chain: DNA repair protein RecO (227 aa).

The protein belongs to the RecO family.

Its function is as follows. Involved in DNA repair and RecF pathway recombination. The sequence is that of DNA repair protein RecO from Pseudomonas savastanoi pv. phaseolicola (strain 1448A / Race 6) (Pseudomonas syringae pv. phaseolicola (strain 1448A / Race 6)).